The sequence spans 2175 residues: Non-reducing polyketide synthase PKS1 (2175 aa).

The segment at 5 to 242 is N-terminal acylcarrier protein transacylase domain (SAT); sequence LLFGDQTAEQ…VSIPIYGPYH (238 aa). A Ketosynthase family 3 (KS3) domain is found at 369 to 801; that stretch reads TDKIAIVGMA…GGNTALLIED (433 aa). Residues Cys541, His676, and His719 each act as for beta-ketoacyl synthase activity in the active site. Residues 900–1212 are malonyl-CoA:ACP transacylase (MAT) domain; it reads FCFTGQGSQY…ISTSICHLFT (313 aa). The For acyl/malonyl transferase activity role is filled by Ser988. Residues 1285–1604 form a product template (PT) domain region; that stretch reads STSCQNVISE…RKVLNVFLPP (320 aa). The N-terminal hotdog fold stretch occupies residues 1289 to 1424; it reads QNVISEEFDG…CTIRYEDKAV (136 aa). The PKS/mFAS DH domain maps to 1289–1599; that stretch reads QNVISEEFDG…FQQIPRKVLN (311 aa). His1321 serves as the catalytic Proton acceptor; for dehydratase activity. Residues 1452–1599 are C-terminal hotdog fold; sequence AHKVQRGMAY…FQQIPRKVLN (148 aa). Asp1512 serves as the catalytic Proton donor; for dehydratase activity. Residues 1640–1664 are disordered; it reads PVRKSAGPAKAAAAPSMPKPSKVAA. Low complexity predominate over residues 1643-1664; sequence KSAGPAKAAAAPSMPKPSKVAA. The Carrier 1 domain maps to 1666–1743; it reads KPAGSMVDKV…EMKKYFSQFN (78 aa). The residue at position 1703 (Ser1703) is an O-(pantetheine 4'-phosphoryl)serine. Residues 1766–1804 are disordered; sequence ATPFDEMSTPASSAPSVPQSDAGKPSPDSPTGDSLSDDV. A compositionally biased stretch (polar residues) spans 1774–1784; that stretch reads TPASSAPSVPQ. One can recognise a Carrier 2 domain in the interval 1801–1878; the sequence is SDDVGDVSIA…DIENALGMRP (78 aa). Ser1838 carries the post-translational modification O-(pantetheine 4'-phosphoryl)serine. The disordered stretch occupies residues 1879–1899; the sequence is KPKAVGPKLSKPSTKTDMNEV. Over residues 1889–1899 the composition is skewed to polar residues; the sequence is KPSTKTDMNEV. Positions 1932–2158 are claisen cyclase domain; sequence KVFFLPDGSG…GHHFSMMKDP (227 aa). The For Claisen cyclase activity role is filled by Ser2002.

Pantetheine 4'-phosphate serves as cofactor.

It carries out the reaction 6 malonyl-CoA + acetyl-CoA + 6 H(+) = naphtopyrone YWA1 + 6 CO2 + 7 CoA + H2O. It functions in the pathway pigment biosynthesis; melanin biosynthesis. Its function is as follows. Non-reducing polyketide synthase; part of the gene cluster 29 that mediates the biosynthesis of mediates the biosynthesis of dihydroxynaphthalene (DHN)-melanin, a bluish-green pigment and a structural component of the conidial wall. The first step of the pathway is the production of the heptaketide naphtopyrone YWA1 by the polyketide synthase PKS1 though condensation of acetyl-CoA with malonyl-CoA. This Zymoseptoria tritici (strain CBS 115943 / IPO323) (Speckled leaf blotch fungus) protein is Non-reducing polyketide synthase PKS1.